The sequence spans 514 residues: Bifunctional purine biosynthesis protein PurH (514 aa).

The MGS-like domain maps to 1–142 (MLALLSVSDK…KNFRHVSVVV (142 aa)).

Belongs to the PurH family.

It carries out the reaction (6R)-10-formyltetrahydrofolate + 5-amino-1-(5-phospho-beta-D-ribosyl)imidazole-4-carboxamide = 5-formamido-1-(5-phospho-D-ribosyl)imidazole-4-carboxamide + (6S)-5,6,7,8-tetrahydrofolate. The catalysed reaction is IMP + H2O = 5-formamido-1-(5-phospho-D-ribosyl)imidazole-4-carboxamide. It functions in the pathway purine metabolism; IMP biosynthesis via de novo pathway; 5-formamido-1-(5-phospho-D-ribosyl)imidazole-4-carboxamide from 5-amino-1-(5-phospho-D-ribosyl)imidazole-4-carboxamide (10-formyl THF route): step 1/1. The protein operates within purine metabolism; IMP biosynthesis via de novo pathway; IMP from 5-formamido-1-(5-phospho-D-ribosyl)imidazole-4-carboxamide: step 1/1. This chain is Bifunctional purine biosynthesis protein PurH, found in Myxococcus xanthus (strain DK1622).